The following is a 316-amino-acid chain: L-lactate dehydrogenase (316 aa).

Residues valine 15, aspartate 37, lysine 42, tyrosine 68, and glycine 82–leucine 83 each bind NAD(+). Substrate contacts are provided by residues glutamine 85, arginine 91, and asparagine 123–aspartate 126. Residues alanine 121–asparagine 123 and threonine 146 contribute to the NAD(+) site. Aspartate 151–arginine 154 contacts substrate. Beta-D-fructose 1,6-bisphosphate is bound by residues arginine 156 and histidine 171. Catalysis depends on histidine 178, which acts as the Proton acceptor. Tyrosine 222 bears the Phosphotyrosine mark. Threonine 231 lines the substrate pocket.

It belongs to the LDH/MDH superfamily. LDH family. As to quaternary structure, homotetramer.

The protein resides in the cytoplasm. The enzyme catalyses (S)-lactate + NAD(+) = pyruvate + NADH + H(+). It participates in fermentation; pyruvate fermentation to lactate; (S)-lactate from pyruvate: step 1/1. With respect to regulation, allosterically activated by fructose 1,6-bisphosphate (FBP). Catalyzes the conversion of lactate to pyruvate. The chain is L-lactate dehydrogenase from Borrelia garinii subsp. bavariensis (strain ATCC BAA-2496 / DSM 23469 / PBi) (Borreliella bavariensis).